Reading from the N-terminus, the 387-residue chain is Postreplication repair E3 ubiquitin-protein ligase rad18 (387 aa).

The RING-type zinc finger occupies 29-67 (CLICHEYFRAPLITSCSHTFCSFCIRDYLREHPMCPACR). The interval 119–153 (DSASGDEEWEDDLASNSSPASIAKKTSRDSKKRKR) is disordered. Acidic residues predominate over residues 122 to 131 (SGDEEWEDDL). The segment at 156 to 183 (LVHCPACSNLVPHNQINQHLDSCLNSPS) adopts a UBZ4-type zinc-finger fold. Zn(2+) is bound by residues Cys-159, Cys-162, His-174, and Cys-178. Residues 174–206 (HLDSCLNSPSSPSSSSSPYKNKDNSKSNSLLSF) are disordered. The segment covering 177 to 192 (SCLNSPSSPSSSSSPY) has biased composition (low complexity). Residues 240–274 (YALLSESKIRSKLSEMGLPTDGHKQLLQRRHAKWV) form the SAP domain. A disordered region spans residues 335 to 387 (KQSTTNKNDSLRNTAVESSTEPSTSNGFPATSVSPPLTIDLTNSQTGSDGPQS).

This sequence belongs to the RAD18 family. Interacts with E2 ubc2, forming a complex with ubiquitin ligase activity.

Its subcellular location is the nucleus. It carries out the reaction S-ubiquitinyl-[E2 ubiquitin-conjugating enzyme]-L-cysteine + [acceptor protein]-L-lysine = [E2 ubiquitin-conjugating enzyme]-L-cysteine + N(6)-ubiquitinyl-[acceptor protein]-L-lysine.. Its pathway is protein modification; protein ubiquitination. Functionally, E3 RING-finger protein, member of the UBC2/RAD6 epistasis group. Associates to the E2 ubiquitin conjugating enzyme ubc2/rad6 to form the ubc2-rad18 ubiquitin ligase complex involved in postreplicative repair (PRR) of damaged DNA. In Schizosaccharomyces pombe (strain 972 / ATCC 24843) (Fission yeast), this protein is Postreplication repair E3 ubiquitin-protein ligase rad18 (rhp18).